Here is a 959-residue protein sequence, read N- to C-terminus: MKEMMGVVGIILVVSSCCLSLLDAQEITHPTDVSALQYVHRKLKDPLNHLQDWKKTDPCASNWTGVICIPDPSDGFLHVKELRLLNMNLTGQLAPELGLLSNLTILNFMWNDLTGQIPPELGNLTHLIFLLLSGNQLTGSLPQELGSLSNLLILQIDYNEISGKLPTSLANLKKLKHFHMNNNSITGQIPPEYSTLTNVLHFLMDNNKLTGNLPPELAQMPSLRILQLDGSNFDGTEIPSSYGSIPNLVKLSLRNCNLEGPIPDLSKSLVLYYLDISSNKLTGEIPKNKFSANITTINLYNNLLSGSIPSNFSGLPRLQRLQVQNNNLSGEIPVIWENRILKAEEKLILDLRNNMFSNVSSVLLNPPSNVTVKLYGNPVCANVNAGKLADLCGISTLEVESPATSSETISTGDCKRQSCPVSENYDYVIGSPVACFCAAPLGIDLRLRSPSFSDFRPYKVSYMLDVASPKNLGINPYQISIDTFAWQSGPRLFMNMKIFPEYSELNSKFNSTEVQRIVDFFATFTLNTDDSLGPYEIISINTGAYKDVTIIFPKKSGMSIGVSVGIIIGAIAFFLVLSSLALVFFIKRSKRKRKTREVDMEQEHPLPKPPMNMESVKGYNFTELDSATSSFSDLSQIGRGGYGKVYKGHLPGGLVVAVKRAEQGSLQGQKEFFTEIELLSRLHHRNLVSLLGYCDQKGEQMLVYEYMPNGSLQDALSARFRQPLSLALRLRIALGSARGILYLHTEADPPIIHRDIKPSNILLDSKMNPKVADFGISKLIALDGGGVQRDHVTTIVKGTPGYVDPEYYLSHRLTEKSDVYSLGIVFLEILTGMRPISHGRNIVREVNEACDAGMMMSVIDRSMGQYSEECVKRFMELAIRCCQDNPEARPWMLEIVRELENIYGLIPKEEKPYSSPSVQSSASGMSGFAVASPRSSYTTFSEFTANQLVSGVIPSIAPR.

An N-terminal signal peptide occupies residues 1-24 (MKEMMGVVGIILVVSSCCLSLLDA). The Extracellular portion of the chain corresponds to 25 to 565 (QEITHPTDVS…SGMSIGVSVG (541 aa)). 4 N-linked (GlcNAc...) asparagine glycosylation sites follow: asparagine 62, asparagine 88, asparagine 102, and asparagine 123. 9 LRR repeats span residues 79 to 100 (VKEL…LGLL), 101 to 124 (SNLT…LGNL), 125 to 148 (THLI…LGSL), 149 to 172 (SNLL…LANL), 173 to 198 (KKLK…TLTN), 200 to 220 (LHFL…LAQM), 221 to 244 (PSLR…SYGS), 246 to 268 (PNLV…LSKS), and 269 to 292 (LVLY…KFSA). Asparagine 182 is a glycosylation site (N-linked (GlcNAc...) asparagine). Residues asparagine 293, asparagine 311, asparagine 327, asparagine 358, asparagine 369, and asparagine 510 are each glycosylated (N-linked (GlcNAc...) asparagine). LRR repeat units follow at residues 294–314 (ITTI…NFSG), 315–338 (LPRL…IWEN), and 341–366 (LKAE…LLNP). Residues 566–586 (IIIGAIAFFLVLSSLALVFFI) form a helical membrane-spanning segment. Residues 587–959 (KRSKRKRKTR…SGVIPSIAPR (373 aa)) lie on the Cytoplasmic side of the membrane. The region spanning 631-906 (FSDLSQIGRG…RELENIYGLI (276 aa)) is the Protein kinase domain. ATP is bound by residues 637-645 (IGRGGYGKV) and lysine 659. The Proton acceptor role is filled by aspartate 755.

It belongs to the protein kinase superfamily. Ser/Thr protein kinase family.

It localises to the membrane. The catalysed reaction is L-seryl-[protein] + ATP = O-phospho-L-seryl-[protein] + ADP + H(+). It catalyses the reaction L-threonyl-[protein] + ATP = O-phospho-L-threonyl-[protein] + ADP + H(+). This is Probable LRR receptor-like serine/threonine-protein kinase At5g37450 from Arabidopsis thaliana (Mouse-ear cress).